A 1681-amino-acid chain; its full sequence is MARIFKFFVFLLIVFISNVLLLVESNEGDNSFSSKSIQLSLVSNWGETPSYLEAAEFLHNQDKSLFWKFIEEFNKIDFSTNYSDKIYYESTISLMKSVLSSNTQFLSEFLSIDLAMRTYSPRVETYRQLAISNMKLNNIEHSITTADNKTITLFNSGGWVQIKNKIITDVNEINESLFKDVAVVDDEENEFIRLYDFDHIFPTLANTVSSSSSSPSSIPIVILYVDIKSEFFKLVHPKLKQFSQMGKIKYCLRYVVQESNQKLNLQGYGYELSIKNLEYKVMDDSAIKKDIIIDGVKSKTIINIPNEDVQGFNFHKLQKRKPELTSKLSTFRSYLMAKSQEAKELKVWELKDLGIQSAQKIIQSGDPLRSLEYISQKFPTLSNSLSKITLNESLKSVIESNQKIIPSTTDQTLLLNGRLIDTNELSPIELSRIILEEYEHSTTIQQQGPLSSKTVQDIISAQLPIRIQLLPTKEELELNGGNEPFVSLNNLELDYIYRQWEPKLQSSVLDKPVTSPQDIFIRKNLLTTVIVLDWNNINTFEIIPEIQEMVQGNSLIPTRIQLLFNTKSNNNNNNNNNNNDQNSQTSNFIQGKDLAKVFLTIKNSNLGNRGAFFFITALNYFKKMYIPNELGITRSVLSSSFQAVLQQMGGSVRSLQHALTNTDFDNLLESSNQLIERLELLDTTTSQSTTTTTTTKILPKVFVNGVQVKYSNIDQLSFDLLVSLYDEFDNLKPLFKESILSTTTAQYYETILTSSYWKDNNLPFLKKLNSMISNEKYSHLITNSKNRNQEVDAQNVLKNLLYFRNNENKDEQNLLNLIVIGDFDHYNTRDISLELLRQLEKGELKNCKLTFISNPIDINSVVNTAGNENQILGKLITILKHYGKILTPQLVIGLFEKVQSDPTIIDSFKTMKQIIELSGFDIAANDIWVAQSVNLFKQSSKVCKQYLGIQSTNKSPLSILVNGRIITPPLSYDDAASFIQSDFKLLLEIEMIKAKKTFELLNSDPILKDKSNLKISDLLNKVQSLVGYYYNGNNQLDSNIKRKRIPNSLSISFSHKPPTLSSSSSSSSSNSNDVPLKFLMIINPFNKVSQKLVPMVREFSNKLNIPVDVILNPPVSLSELPLKTYYTYVIKLSSEFNNENVLYNQPLGIATDIPEDRVVTLALDIPSSWLVQPIIAKYDLDNIRLKDLGDEQVLTAVYELENIVIEGSANDMTTDNAPAGLELLLNPISTQTNKTQDTIVMNNFGYYQLKSNPGIWKLTIAPGRSSDIMDMVDHPNQKEKETFVIVPHRLVVIDSLYQSLSSLSVVRKAGQELRPILQPIDEYEKQKEQEKEQKLKQNSSGFFSNLFSSKNDATDSVATHQKKSNLDTIHIFSVASGHLYERFLKIMMLSVVKNTESPIKFWFLKNYLSPAFKEFIPEMAKEYGFQYELVTYKWPWWLRKQTEKQRIIWSYKILFLDVLFPLDVPKIIFVDADQVVRTDLKELWDMDLHGASLGYTPFCDSNKDTEGFRFWKSGYWRQHLAGRSYHISALYVVDLVRFRRLAAGDQLRATYDQLSRDPNSLANLDQDLPNYLQHYVRIHSLPQEWLWCETWCDQESKSKAKTIDLCNNPLTKTPKLENAVRIIDEWTTLDNEAKEFELKIDQSKHHRQIELDHQNQLPNSKPIENIDDILLNLAESQKDLF.

The N-terminal stretch at 1 to 25 is a signal peptide; the sequence is MARIFKFFVFLLIVFISNVLLLVES. N-linked (GlcNAc...) asparagine glycans are attached at residues asparagine 81, asparagine 148, asparagine 174, and asparagine 391. Positions 566–586 are disordered; that stretch reads TKSNNNNNNNNNNNDQNSQTS. The span at 569 to 579 shows a compositional bias: low complexity; the sequence is NNNNNNNNNNN. Residues asparagine 1233 and asparagine 1338 are each glycosylated (N-linked (GlcNAc...) asparagine). The tract at residues 1346–1657 is glucosyltransferase; sequence LFSSKNDATD…QIELDHQNQL (312 aa).

The protein belongs to the glycosyltransferase 8 family. Requires Ca(2+) as cofactor. The cofactor is Mn(2+).

It localises to the endoplasmic reticulum lumen. Its subcellular location is the endoplasmic reticulum-Golgi intermediate compartment. It participates in protein modification; protein glycosylation. In terms of biological role, recognizes glycoproteins with minor folding defects. Reglucosylates single N-glycans near the misfolded part of the protein, thus providing quality control for protein folding in the endoplasmic reticulum. This chain is Probable UDP-glucose:glycoprotein glucosyltransferase A (ggtA), found in Dictyostelium discoideum (Social amoeba).